The following is a 378-amino-acid chain: UPF0754 membrane protein BCAH187_A1042 (378 aa).

The next 2 membrane-spanning stretches (helical) occupy residues 1 to 21 (MNIWLSMLTTTGLGAIIGGFT) and 357 to 377 (YLGALLGGMIGIVQGLLLLFL).

It belongs to the UPF0754 family.

The protein resides in the cell membrane. The sequence is that of UPF0754 membrane protein BCAH187_A1042 from Bacillus cereus (strain AH187).